The chain runs to 150 residues: Large ribosomal subunit protein bL9 (150 aa).

The protein belongs to the bacterial ribosomal protein bL9 family.

Functionally, binds to the 23S rRNA. The sequence is that of Large ribosomal subunit protein bL9 from Burkholderia multivorans (strain ATCC 17616 / 249).